Here is a 433-residue protein sequence, read N- to C-terminus: Cyclin-dependent kinase F-3 (433 aa).

One can recognise a Protein kinase domain in the interval tyrosine 4–phenylalanine 283. ATP-binding positions include isoleucine 10–valine 18 and lysine 33. Aspartate 125 acts as the Proton acceptor in catalysis. The residue at position 151 (serine 151) is a Phosphoserine. Threonine 156 bears the Phosphothreonine mark.

It belongs to the protein kinase superfamily. CMGC Ser/Thr protein kinase family. CDC2/CDKX subfamily.

The catalysed reaction is L-seryl-[protein] + ATP = O-phospho-L-seryl-[protein] + ADP + H(+). It catalyses the reaction L-threonyl-[protein] + ATP = O-phospho-L-threonyl-[protein] + ADP + H(+). It carries out the reaction [DNA-directed RNA polymerase] + ATP = phospho-[DNA-directed RNA polymerase] + ADP + H(+). This is Cyclin-dependent kinase F-3 (CDKF-3) from Oryza sativa subsp. japonica (Rice).